Consider the following 47-residue polypeptide: uncharacterized protein (47 aa).

2 disordered regions span residues 1–20 and 25–47; these read MSTDNFEKIKGRPTQKEEWQ and EKEKDENNRLFQEQKQKTTNRKG. Over residues 25-40 the composition is skewed to basic and acidic residues; sequence EKEKDENNRLFQEQKQ.

This is an uncharacterized protein from Dictyostelium discoideum (Social amoeba).